A 163-amino-acid chain; its full sequence is Probable ribosome biogenesis protein RLP24 (163 aa).

This sequence belongs to the eukaryotic ribosomal protein eL24 family. As to quaternary structure, associated with nucleolar and cytoplasmic pre-60S particles. At the end of biogenesis it dissociates from cytoplasmic pre-60S particles and is likely to be exchanged for its ribosomal homolog, RPL24.

The protein resides in the nucleus. It localises to the nucleolus. Functionally, involved in the biogenesis of the 60S ribosomal subunit. Ensures the docking of GTPBP4/NOG1 to pre-60S particles. The chain is Probable ribosome biogenesis protein RLP24 (RSL24D1) from Homo sapiens (Human).